The following is a 256-amino-acid chain: Beta-fibrinogenase-like (256 aa).

Residues 1 to 18 form the signal peptide; that stretch reads MVLIKVLANLLVLQLSYA. The propeptide occupies 19–24; that stretch reads QKSSEL. A Peptidase S1 domain is found at 25-247; that stretch reads VVGGDECNIN…YTDWIQSIIA (223 aa). 6 disulfides stabilise this stretch: cysteine 31/cysteine 161, cysteine 49/cysteine 65, cysteine 96/cysteine 254, cysteine 140/cysteine 208, cysteine 172/cysteine 187, and cysteine 198/cysteine 223. Asparagine 44 carries an N-linked (GlcNAc...) asparagine glycan. The active-site Charge relay system is the histidine 64. N-linked (GlcNAc...) asparagine glycosylation is found at asparagine 78 and asparagine 101. Residue aspartate 108 is the Charge relay system of the active site. Asparagine 152 carries N-linked (GlcNAc...) asparagine glycosylation. The Charge relay system role is filled by serine 202.

The protein belongs to the peptidase S1 family. Snake venom subfamily. In terms of assembly, monomer. As to expression, expressed by the venom gland.

It is found in the secreted. Functionally, snake venom serine protease that has fibrinogenolytic activities by hydrolyzing the beta chain of fibrinogen (FGB). Typical arginine esterase which hydrolyzes esters and amides of arginine. The polypeptide is Beta-fibrinogenase-like (Daboia siamensis (Eastern Russel's viper)).